Here is a 698-residue protein sequence, read N- to C-terminus: MKEVGEVEEVRCLDPQLWHACAGGMVQMPAPRSRVYYFAQGHAEHADGGGGAAAAAAELGPRALPPLVLCRVEGVQFLADRDSDEVYAKIRLAPVAPGEAEFREPDELCPLGAAGDAAEPSPEKPTSFAKTLTQSDANNGGGFSVPRYCAETIFPKLDYRADPPVQTVLAKDVHGVVWKFRHIYRGTPRRHLLTTGWSTFVNQKKLVAGDSIVFLRTRHGELCVGIRRAKRMACGGMECMSGWNAPGYGGGGFSAFLKEEESKLMKGHGGGGYMKGKGKVRMADVVEAASLASSGQPFEVAYYPRASTPDFVVKAASVQAAMRIQWCSGMRFKMAFETEDSSRISWFMGTISSVQVADPNRWPNSPWRLLQVTWDEPDLLQNVKCVSPWLVELVSSIPPIHLGPFSSPRKKLRVPPHPDFPFEGHLLNPIFHGNPLGPSNSPLCCYPDTAPAGIQGARHAQFGLPLTDHQLNKLHLGLLHSGSFNRLDAITPPSRISKGFVVSSAPAHDNISCLLSISTPQVAEKSDDRKTTPHIMLFGKAIFTEQQITSSGSTETLSPGVTGNSSPNGNAHKTGNASDGSGSSICIGFSSQGHEASDLGLEAGHCKVFMESEDVGRTIDLSVFGSYEELYGRLADMFGIEKEEIINHLHFRDAAGVVKHPGEVPFSDFMKAARRLTIIAGDRERIERPLIECLVEQA.

The segment at residues 128-230 (FAKTLTQSDA…ELCVGIRRAK (103 aa)) is a DNA-binding region (TF-B3). A compositionally biased stretch (polar residues) spans 549 to 577 (TSSGSTETLSPGVTGNSSPNGNAHKTGNA). A disordered region spans residues 549-579 (TSSGSTETLSPGVTGNSSPNGNAHKTGNASD). Residues 603–683 (AGHCKVFMES…RRLTIIAGDR (81 aa)) form the PB1 domain.

Belongs to the ARF family. In terms of assembly, homodimers and heterodimers. In terms of tissue distribution, expressed in roots, culms, leaves and young panicles.

Its subcellular location is the nucleus. Auxin response factors (ARFs) are transcriptional factors that bind specifically to the DNA sequence 5'-TGTCTC-3' found in the auxin-responsive promoter elements (AuxREs). The protein is Auxin response factor 22 (ARF22) of Oryza sativa subsp. japonica (Rice).